The sequence spans 327 residues: Undecaprenyl-phosphate 4-deoxy-4-formamido-L-arabinose transferase (327 aa).

The next 2 membrane-spanning stretches (helical) occupy residues 233 to 253 (ILSL…LLLI) and 268 to 288 (VFTL…GMGL).

The protein belongs to the glycosyltransferase 2 family.

The protein localises to the cell inner membrane. The catalysed reaction is UDP-4-deoxy-4-formamido-beta-L-arabinose + di-trans,octa-cis-undecaprenyl phosphate = 4-deoxy-4-formamido-alpha-L-arabinopyranosyl di-trans,octa-cis-undecaprenyl phosphate + UDP. Its pathway is glycolipid biosynthesis; 4-amino-4-deoxy-alpha-L-arabinose undecaprenyl phosphate biosynthesis; 4-amino-4-deoxy-alpha-L-arabinose undecaprenyl phosphate from UDP-4-deoxy-4-formamido-beta-L-arabinose and undecaprenyl phosphate: step 1/2. It participates in bacterial outer membrane biogenesis; lipopolysaccharide biosynthesis. Its function is as follows. Catalyzes the transfer of 4-deoxy-4-formamido-L-arabinose from UDP to undecaprenyl phosphate. The modified arabinose is attached to lipid A and is required for resistance to polymyxin and cationic antimicrobial peptides. The polypeptide is Undecaprenyl-phosphate 4-deoxy-4-formamido-L-arabinose transferase (Pectobacterium atrosepticum (strain SCRI 1043 / ATCC BAA-672) (Erwinia carotovora subsp. atroseptica)).